We begin with the raw amino-acid sequence, 156 residues long: Small ribosomal subunit protein uS7cz/uS7cy (156 aa).

Belongs to the universal ribosomal protein uS7 family. Part of the 30S ribosomal subunit.

It is found in the plastid. The protein localises to the chloroplast. Functionally, one of the primary rRNA binding proteins, it binds directly to 16S rRNA where it nucleates assembly of the head domain of the 30S subunit. The chain is Small ribosomal subunit protein uS7cz/uS7cy (rps7-A) from Saccharum hybrid (Sugarcane).